The primary structure comprises 497 residues: Membrane-bound lytic murein transglycosylase F (497 aa).

The signal sequence occupies residues 1-29 (MFFRPDFRPRCAKWLIATGLFLMLGACVE). Residues 30–267 (KPTTLERVKE…RLKDRYYGHV (238 aa)) form a non-LT domain region. Residues 268-497 (DVLGYVGAYT…PASSPEKPAL (230 aa)) are LT domain. Residue glutamate 314 is part of the active site. Positions 464–497 (VADGNLHVPGVDKTQPPAPTAPVVPASSPEKPAL) are disordered. The span at 486–497 (VVPASSPEKPAL) shows a compositional bias: low complexity.

It in the N-terminal section; belongs to the bacterial solute-binding protein 3 family. The protein in the C-terminal section; belongs to the transglycosylase Slt family.

It is found in the cell outer membrane. The enzyme catalyses Exolytic cleavage of the (1-&gt;4)-beta-glycosidic linkage between N-acetylmuramic acid (MurNAc) and N-acetylglucosamine (GlcNAc) residues in peptidoglycan, from either the reducing or the non-reducing ends of the peptidoglycan chains, with concomitant formation of a 1,6-anhydrobond in the MurNAc residue.. Its function is as follows. Murein-degrading enzyme that degrades murein glycan strands and insoluble, high-molecular weight murein sacculi, with the concomitant formation of a 1,6-anhydromuramoyl product. Lytic transglycosylases (LTs) play an integral role in the metabolism of the peptidoglycan (PG) sacculus. Their lytic action creates space within the PG sacculus to allow for its expansion as well as for the insertion of various structures such as secretion systems and flagella. The protein is Membrane-bound lytic murein transglycosylase F of Pseudomonas syringae pv. tomato (strain ATCC BAA-871 / DC3000).